The chain runs to 434 residues: MEVFKNVVCPFCGTLCDDIEVLVENNHVVGTRNACRIGNAKFMHFEGAIRHESPLMRENKKDDFKKVDYETATEETARLLVEAKLPLIYGWSSAECHAQQLGVLLAEKTKAIVDNTASVUHGPSLLAVQDVGYPVSTLGETKNRADVVLFWGSNPMHAHPRHMSRYSVFPRGFFRQRGKQDRQMIVVDPRKTDTAKLADIHLQVEPHKDYELVSALRAAAKGFNIEAEQVAGVPTETIYEAVDICKNAQFGSLFFAMGVTMSRGKHRIIDNAIQFVIDMNAYTKFVLTPMRGHYNVNGFNQVSTWVTGYPYGVDFSRGYPRYNPGETASNDVLQRGDTDMMINVASDAGAHFPQKAVQHMAKIPLVCIDPHETPSSVISNIVLPPAITGLEVSGTAYRMDGVPIELRKVIKAPEGMLSDAEIMKMLIKKVDEMK.

A non-standard amino acid (selenocysteine) is located at residue U120.

Belongs to the FwdB family. In terms of assembly, this enzyme is composed of six subunits FwdA, FwdC, FwdD, FwdE, FwdF and FwdG. Requires W-bis(molybdopterin guanine dinucleotide) as cofactor.

The enzyme catalyses N-formylmethanofuran + 2 oxidized [2Fe-2S]-[ferredoxin] + H2O = methanofuran + 2 reduced [2Fe-2S]-[ferredoxin] + CO2 + H(+). The protein operates within one-carbon metabolism; methanogenesis from CO(2); 5,10-methenyl-5,6,7,8-tetrahydromethanopterin from CO(2): step 1/3. In terms of biological role, catalyzes the reversible oxidation of CO(2) and methanofuran (MFR) to N-formylmethanofuran (CHO-MFR). This enzyme is oxygen-labile. The sequence is that of Tungsten-containing formylmethanofuran dehydrogenase 2 subunit B (fwdB) from Methanococcus maripaludis (strain DSM 14266 / JCM 13030 / NBRC 101832 / S2 / LL).